The sequence spans 329 residues: Calponin-3 (329 aa).

N6-acetyllysine is present on K23. Residues 26–130 (HQAEEDLRNW…TLVALAGLAK (105 aa)) enclose the Calponin-homology (CH) domain. The residue at position 158 (K158) is an N6-methyllysine. 3 Calponin-like repeats span residues 164–189 (IGLQ…RHLY), 204–229 (ISLQ…RDIY), and 243–268 (ISLQ…RQVY). The tract at residues 280–329 (VIHNGSQGTGTNGSEISDSDYQAEYPDEYHGEYQDDYPRDYQYGDQGIDY) is disordered. Residues 306-318 (DEYHGEYQDDYPR) are compositionally biased toward basic and acidic residues.

It belongs to the calponin family.

In terms of biological role, thin filament-associated protein that is implicated in the regulation and modulation of smooth muscle contraction. It is capable of binding to actin, calmodulin and tropomyosin. The interaction of calponin with actin inhibits the actomyosin Mg-ATPase activity. The polypeptide is Calponin-3 (CNN3) (Bos taurus (Bovine)).